We begin with the raw amino-acid sequence, 263 residues long: Endonuclease 8 (263 aa).

Pro-2 serves as the catalytic Schiff-base intermediate with DNA. Residue Glu-3 is the Proton donor of the active site. Lys-53 acts as the Proton donor; for beta-elimination activity in catalysis. The DNA site is built by Gln-70, Arg-125, and Asn-169. The FPG-type zinc finger occupies 229-263; that stretch reads KVFHRDGELCERCGGIIEKTTLSSRPFYWCPGCQH. Arg-253 functions as the Proton donor; for delta-elimination activity in the catalytic mechanism.

It belongs to the FPG family. Zn(2+) is required as a cofactor.

The catalysed reaction is 2'-deoxyribonucleotide-(2'-deoxyribose 5'-phosphate)-2'-deoxyribonucleotide-DNA = a 3'-end 2'-deoxyribonucleotide-(2,3-dehydro-2,3-deoxyribose 5'-phosphate)-DNA + a 5'-end 5'-phospho-2'-deoxyribonucleoside-DNA + H(+). Involved in base excision repair of DNA damaged by oxidation or by mutagenic agents. Acts as a DNA glycosylase that recognizes and removes damaged bases. Has a preference for oxidized pyrimidines, such as thymine glycol, 5,6-dihydrouracil and 5,6-dihydrothymine. Has AP (apurinic/apyrimidinic) lyase activity and introduces nicks in the DNA strand. Cleaves the DNA backbone by beta-delta elimination to generate a single-strand break at the site of the removed base with both 3'- and 5'-phosphates. This is Endonuclease 8 from Shigella boydii serotype 4 (strain Sb227).